Consider the following 97-residue polypeptide: Putative pterin-4-alpha-carbinolamine dehydratase (97 aa).

This sequence belongs to the pterin-4-alpha-carbinolamine dehydratase family.

It carries out the reaction (4aS,6R)-4a-hydroxy-L-erythro-5,6,7,8-tetrahydrobiopterin = (6R)-L-erythro-6,7-dihydrobiopterin + H2O. The chain is Putative pterin-4-alpha-carbinolamine dehydratase from Christiangramia forsetii (strain DSM 17595 / CGMCC 1.15422 / KT0803) (Gramella forsetii).